Here is a 157-residue protein sequence, read N- to C-terminus: ATP synthase subunit b (157 aa).

The helical transmembrane segment at 7–27 (LIAQLVVFFILAWVTMKFVWP) threads the bilayer.

The protein belongs to the ATPase B chain family. As to quaternary structure, F-type ATPases have 2 components, F(1) - the catalytic core - and F(0) - the membrane proton channel. F(1) has five subunits: alpha(3), beta(3), gamma(1), delta(1), epsilon(1). F(0) has three main subunits: a(1), b(2) and c(10-14). The alpha and beta chains form an alternating ring which encloses part of the gamma chain. F(1) is attached to F(0) by a central stalk formed by the gamma and epsilon chains, while a peripheral stalk is formed by the delta and b chains.

It is found in the cell inner membrane. In terms of biological role, f(1)F(0) ATP synthase produces ATP from ADP in the presence of a proton or sodium gradient. F-type ATPases consist of two structural domains, F(1) containing the extramembraneous catalytic core and F(0) containing the membrane proton channel, linked together by a central stalk and a peripheral stalk. During catalysis, ATP synthesis in the catalytic domain of F(1) is coupled via a rotary mechanism of the central stalk subunits to proton translocation. Functionally, component of the F(0) channel, it forms part of the peripheral stalk, linking F(1) to F(0). The chain is ATP synthase subunit b from Aromatoleum aromaticum (strain DSM 19018 / LMG 30748 / EbN1) (Azoarcus sp. (strain EbN1)).